Reading from the N-terminus, the 462-residue chain is Chromosomal replication initiator protein DnaA (462 aa).

Residues 1–86 (MSLSLWQQCL…EVGNKPVSQN (86 aa)) form a domain I, interacts with DnaA modulators region. The segment at 86-125 (NDSPPQRVVTHTPVAPAPQNTSVRPSWDNTAVQPELSYRS) is domain II. Residues 126 to 342 (NVNPKHTFDN…GALNRVIANA (217 aa)) form a domain III, AAA+ region region. Positions 170, 172, 173, and 174 each coordinate ATP. Residues 343–462 (NFTGRAITID…FSNLIRTLSS (120 aa)) form a domain IV, binds dsDNA region.

It belongs to the DnaA family. As to quaternary structure, oligomerizes as a right-handed, spiral filament on DNA at oriC.

It is found in the cytoplasm. Its function is as follows. Plays an essential role in the initiation and regulation of chromosomal replication. ATP-DnaA binds to the origin of replication (oriC) to initiate formation of the DNA replication initiation complex once per cell cycle. Binds the DnaA box (a 9 base pair repeat at the origin) and separates the double-stranded (ds)DNA. Forms a right-handed helical filament on oriC DNA; dsDNA binds to the exterior of the filament while single-stranded (ss)DNA is stabiized in the filament's interior. The ATP-DnaA-oriC complex binds and stabilizes one strand of the AT-rich DNA unwinding element (DUE), permitting loading of DNA polymerase. After initiation quickly degrades to an ADP-DnaA complex that is not apt for DNA replication. Binds acidic phospholipids. The chain is Chromosomal replication initiator protein DnaA from Photorhabdus laumondii subsp. laumondii (strain DSM 15139 / CIP 105565 / TT01) (Photorhabdus luminescens subsp. laumondii).